Here is a 412-residue protein sequence, read N- to C-terminus: Inactive serine protease 35 (412 aa).

The first 23 residues, 1 to 23, serve as a signal peptide directing secretion; it reads MGAMFFGLMLFTLGWTLIDGSES. Asparagine 110 carries N-linked (GlcNAc...) asparagine glycosylation. A Peptidase S1 domain is found at 124 to 407; that stretch reads VYGTDSRFSI…ICLWMHGDDA (284 aa). Residues cysteine 154 and cysteine 170 are joined by a disulfide bond. Over residues 192–207 the composition is skewed to basic residues; it reads RNKGGGKRRRGSRRNR. A disordered region spans residues 192–246; the sequence is RNKGGGKRRRGSRRNRREVSGAGREGSQDSLKETAKAGRRRKGSARRQRAADGRP. Residues 217 to 227 show a composition bias toward basic and acidic residues; that stretch reads GSQDSLKETAK. The span at 228-239 shows a compositional bias: basic residues; sequence AGRRRKGSARRQ.

This sequence belongs to the peptidase S1 family.

It localises to the secreted. This Bos taurus (Bovine) protein is Inactive serine protease 35 (PRSS35).